Reading from the N-terminus, the 483-residue chain is Probable L-xylulose kinase (483 aa).

Belongs to the FGGY kinase family. In terms of assembly, homodimer.

It carries out the reaction L-xylulose + ATP = L-xylulose 5-phosphate + ADP + H(+). In Pasteurella multocida (strain Pm70), this protein is Probable L-xylulose kinase (lyx).